Consider the following 490-residue polypeptide: Acetyl-coenzyme A carboxylase carboxyl transferase subunit beta, chloroplastic (490 aa).

The CoA carboxyltransferase N-terminal domain occupies 228-490 (LWVQCENCYG…FKLHAFFPLN (263 aa)). The Zn(2+) site is built by Cys232, Cys235, Cys251, and Cys254. Residues 232–254 (CENCYGLNYKKLLKSKMNICDQC) form a C4-type zinc finger.

It belongs to the AccD/PCCB family. In terms of assembly, acetyl-CoA carboxylase is a heterohexamer composed of biotin carboxyl carrier protein, biotin carboxylase and 2 subunits each of ACCase subunit alpha and ACCase plastid-coded subunit beta (accD). The cofactor is Zn(2+).

It is found in the plastid. It localises to the chloroplast stroma. The enzyme catalyses N(6)-carboxybiotinyl-L-lysyl-[protein] + acetyl-CoA = N(6)-biotinyl-L-lysyl-[protein] + malonyl-CoA. The protein operates within lipid metabolism; malonyl-CoA biosynthesis; malonyl-CoA from acetyl-CoA: step 1/1. Its function is as follows. Component of the acetyl coenzyme A carboxylase (ACC) complex. Biotin carboxylase (BC) catalyzes the carboxylation of biotin on its carrier protein (BCCP) and then the CO(2) group is transferred by the transcarboxylase to acetyl-CoA to form malonyl-CoA. This chain is Acetyl-coenzyme A carboxylase carboxyl transferase subunit beta, chloroplastic, found in Eucalyptus globulus subsp. globulus (Tasmanian blue gum).